The following is a 441-amino-acid chain: Histidinol dehydrogenase homolog (441 aa).

Residue histidine 266 coordinates Zn(2+). Active-site proton acceptor residues include glutamate 334 and histidine 335. Position 427 (histidine 427) interacts with Zn(2+).

The protein belongs to the histidinol dehydrogenase family. Zn(2+) is required as a cofactor.

The chain is Histidinol dehydrogenase homolog from Cereibacter sphaeroides (strain ATCC 17023 / DSM 158 / JCM 6121 / CCUG 31486 / LMG 2827 / NBRC 12203 / NCIMB 8253 / ATH 2.4.1.) (Rhodobacter sphaeroides).